A 476-amino-acid polypeptide reads, in one-letter code: Cysteine--tRNA ligase (476 aa).

Cysteine 36 lines the Zn(2+) pocket. A 'HIGH' region motif is present at residues 38–48; that stretch reads PTVYDYAHIGN. Positions 221, 246, and 250 each coordinate Zn(2+). The 'KMSKS' region motif lies at 278–282; sequence KMSKS. Lysine 281 lines the ATP pocket.

The protein belongs to the class-I aminoacyl-tRNA synthetase family. In terms of assembly, monomer. Zn(2+) is required as a cofactor.

It is found in the cytoplasm. It catalyses the reaction tRNA(Cys) + L-cysteine + ATP = L-cysteinyl-tRNA(Cys) + AMP + diphosphate. This Chlamydia felis (strain Fe/C-56) (Chlamydophila felis) protein is Cysteine--tRNA ligase.